The chain runs to 197 residues: Peptide deformylase (197 aa).

Positions 106 and 148 each coordinate Fe cation. Residue glutamate 149 is part of the active site. Histidine 152 contacts Fe cation.

Belongs to the polypeptide deformylase family. The cofactor is Fe(2+).

The catalysed reaction is N-terminal N-formyl-L-methionyl-[peptide] + H2O = N-terminal L-methionyl-[peptide] + formate. In terms of biological role, removes the formyl group from the N-terminal Met of newly synthesized proteins. Requires at least a dipeptide for an efficient rate of reaction. N-terminal L-methionine is a prerequisite for activity but the enzyme has broad specificity at other positions. The protein is Peptide deformylase of Mycobacterium tuberculosis (strain ATCC 25177 / H37Ra).